We begin with the raw amino-acid sequence, 279 residues long: Universal stress protein MT2087 (279 aa).

Belongs to the universal stress protein A family.

The chain is Universal stress protein MT2087 from Mycobacterium tuberculosis (strain CDC 1551 / Oshkosh).